Consider the following 1083-residue polypeptide: Ubiquitin-protein ligase E3C (1083 aa).

2 stretches are compositionally biased toward basic and acidic residues: residues 1–10 (MFSFEGDFKT) and 20–40 (SRKE…RKRE). The segment at 1-40 (MFSFEGDFKTRPKVSLGGASRKEEKASLLHRTQEERRKRE) is disordered. Residues 1–60 (MFSFEGDFKTRPKVSLGGASRKEEKASLLHRTQEERRKREEERRRLKNAVIIQSFIRGYR) form a cis-determinant of acceptor ubiquitin-binding region. Residues 45–74 (RLKNAVIIQSFIRGYRDRKQQYFIQRSAFD) enclose the IQ domain. The segment at 354–386 (ASPTGTGCPDSTSDSEDDNEETDQPNSPEDGRV) is disordered. Acidic residues predominate over residues 366–376 (SDSEDDNEETD). The HECT domain maps to 744 to 1083 (NEPDLKKRIR…IECAAGFELS (340 aa)). A Glycyl lysine isopeptide (Lys-Gly) (interchain with G-Cter in ubiquitin); by autocatalysis cross-link involves residue Lys903. The active-site Glycyl thioester intermediate is Cys1051.

Belongs to the UBE3C family. As to quaternary structure, interacts with 26S proteasomes. Interacts (via the HECT domain) with UBE2D1 and, less efficiently, with UBE2L3. Post-translationally, autoubiquitinated; promoting its own degradation.

It carries out the reaction S-ubiquitinyl-[E2 ubiquitin-conjugating enzyme]-L-cysteine + [acceptor protein]-L-lysine = [E2 ubiquitin-conjugating enzyme]-L-cysteine + N(6)-ubiquitinyl-[acceptor protein]-L-lysine.. The protein operates within protein modification; protein ubiquitination. Functionally, E3 ubiquitin-protein ligase that specifically catalyzes 'Lys-29'- and 'Lys-48'-linked polyubiquitin chains. Accepts ubiquitin from the E2 ubiquitin-conjugating enzyme UBE2D1 in the form of a thioester and then directly transfers the ubiquitin to targeted substrates. Associates with the proteasome and promotes elongation of ubiquitin chains on substrates bound to the 26S proteasome. Also catalyzes 'Lys-29'- and 'Lys-48'-linked ubiquitination of 26S proteasome subunit ADRM1/RPN13 in response to proteotoxic stress, impairing the ability of the proteasome to bind and degrade ubiquitin-conjugated proteins. Acts as a negative regulator of autophagy by mediating 'Lys-29'- and 'Lys-48'-linked ubiquitination of PIK3C3/VPS34, promoting its degradation. Can assemble unanchored poly-ubiquitin chains in either 'Lys-29'- or 'Lys-48'-linked polyubiquitin chains; with some preference for 'Lys-48' linkages. Acts as a negative regulator of type I interferon by mediating 'Lys-48'-linked ubiquitination of IRF3 and IRF7, leading to their degradation by the proteasome. Catalyzes ubiquitination and degradation of CAND2. This Mus musculus (Mouse) protein is Ubiquitin-protein ligase E3C.